We begin with the raw amino-acid sequence, 329 residues long: BTB/POZ domain-containing adapter for CUL3-mediated RhoA degradation protein 1 (329 aa).

Positions 1 to 22 (MSAEASGPAAAAAPSLEAPKPS) are enriched in low complexity. A disordered region spans residues 1 to 31 (MSAEASGPAAAAAPSLEAPKPSGLEPGPAAY). The BTB domain maps to 41 to 109 (KYVKLNVGGS…LRDGSVPLPE (69 aa)). The interval 282–303 (ATGGAAGAGGAGRGEDEENREH) is disordered.

Belongs to the BACURD family. As to quaternary structure, homotetramer; forms a two-fold symmetric tetramer in solution. Interacts with CUL3; interaction is direct and forms a 5:5 heterodecamer. Component of the BCR(KCTD13) E3 ubiquitin ligase complex, at least composed of CUL3, KCTD13/BACURD1 and RBX1. Interacts with RHOA; with a preference for RhoA-GDP. Interacts with POLD2 and PCNA. Interacts with SPRTN. In terms of tissue distribution, expressed in a wide variety of tissues.

The protein resides in the nucleus. The protein operates within protein modification; protein ubiquitination. Substrate-specific adapter of a BCR (BTB-CUL3-RBX1) E3 ubiquitin-protein ligase complex required for synaptic transmission. The BCR(KCTD13) E3 ubiquitin ligase complex mediates the ubiquitination of RHOA, leading to its degradation by the proteasome Degradation of RHOA regulates the actin cytoskeleton and promotes synaptic transmission. This is BTB/POZ domain-containing adapter for CUL3-mediated RhoA degradation protein 1 (KCTD13) from Homo sapiens (Human).